The chain runs to 361 residues: Peptide chain release factor 1 (361 aa).

An N5-methylglutamine modification is found at glutamine 235.

Belongs to the prokaryotic/mitochondrial release factor family. In terms of processing, methylated by PrmC. Methylation increases the termination efficiency of RF1.

It is found in the cytoplasm. Peptide chain release factor 1 directs the termination of translation in response to the peptide chain termination codons UAG and UAA. The sequence is that of Peptide chain release factor 1 from Buchnera aphidicola subsp. Schizaphis graminum (strain Sg).